A 448-amino-acid chain; its full sequence is U1 small nuclear ribonucleoprotein 70 kDa (448 aa).

The tract at residues 91–201 (TEIKNATEDP…GGGLGGTRRG (111 aa)) is required for interaction with U1 RNA. In terms of domain architecture, RRM spans 102–180 (RTLFIARINY…KRVLVDVERA (79 aa)). A disordered region spans residues 188 to 448 (PRRLGGGLGG…SSGDPSWWRQ (261 aa)). The segment covering 191–200 (LGGGLGGTRR) has biased composition (gly residues). Composition is skewed to basic and acidic residues over residues 206-234 (NIKHSGREDNERERERYRLEREREDREGP) and 262-272 (ERRDRERDRGR). Basic residues predominate over residues 281 to 293 (SRSRSRERRKRRA). 2 stretches are compositionally biased toward basic and acidic residues: residues 294–320 (GSRERYDEFDRRDRRDRERERDRDRER) and 346–376 (RDRERGTGSGGDVKERKPDFRDMDVIKIKEE). The tract at residues 405-425 (RPPPAHHNMFSVPPPPILGRG) is mediates binding to Psi. The span at 426 to 448 (NASTNPNPDNGQQSSGDPSWWRQ) shows a compositional bias: polar residues.

Component of the U1 snRNP. Interacts with Psi; essential for alternative splicing of P-element transposase. Interacts with the SMN complex.

It localises to the nucleus speckle. The protein resides in the nucleus. Its subcellular location is the nucleoplasm. Mediates the splicing of pre-mRNA by binding to the stem loop I region of U1-snRNA. Required during oogenesis for nurse cell chromatin dispersal. The sequence is that of U1 small nuclear ribonucleoprotein 70 kDa (snRNP-U1-70K) from Drosophila melanogaster (Fruit fly).